The primary structure comprises 348 residues: NADH-ubiquinone oxidoreductase chain 2 (348 aa).

The next 10 membrane-spanning stretches (helical) occupy residues 2–22 (SPYV…LTLF), 26–46 (WLMA…MMTY), 55–75 (AAIK…FAII), 96–116 (VLMT…FWVP), 149–169 (LNMK…GWGG), 178–198 (ILAY…MINP), 199–219 (SLAL…FLML), 242–262 (TAIL…GFMP), 276–296 (IIMA…YMRI), and 323–343 (INII…TPLL).

It belongs to the complex I subunit 2 family. In terms of assembly, core subunit of respiratory chain NADH dehydrogenase (Complex I) which is composed of 45 different subunits. Interacts with TMEM242.

The protein resides in the mitochondrion inner membrane. The enzyme catalyses a ubiquinone + NADH + 5 H(+)(in) = a ubiquinol + NAD(+) + 4 H(+)(out). Core subunit of the mitochondrial membrane respiratory chain NADH dehydrogenase (Complex I) that is believed to belong to the minimal assembly required for catalysis. Complex I functions in the transfer of electrons from NADH to the respiratory chain. The immediate electron acceptor for the enzyme is believed to be ubiquinone. The sequence is that of NADH-ubiquinone oxidoreductase chain 2 from Osphranter robustus (Wallaroo).